Here is a 2342-residue protein sequence, read N- to C-terminus: Outer kinetochore KNL1 complex subunit KNL1 (2342 aa).

The tract at residues 1 to 56 is disordered; that stretch reads MDGVSSEANEENDNIERPVRRRHSSILKPPRSPLQDLRGGNERVQESNALRNKKNS. Positions 1–250 are may mediate oligomerization; that stretch reads MDGVSSEANE…FNDFIKRLKT (250 aa). Residues 1–728 form an interaction with BUB1 and BUB1B region; the sequence is MDGVSSEANE…QSLFSTTKPL (728 aa). 2 interaction with microtubules regions span residues 17–34 and 53–80; these read RPVR…RSPL and KKNS…VRKS. Positions 23–80 are interaction with PP1CA; contains the protein phosphatase 1 (PP1) interaction motifs SILK, RVXF and phi-phi; sequence HSSILKPPRSPLQDLRGGNERVQESNALRNKKNSRRVSFADTIKVFQTESHMKIVRKS. Phosphoserine; by AURKB is present on S24. S32 carries the phosphoserine modification. At S60 the chain carries Phosphoserine; by AURKB. Residues 174–190 are interaction with BUB1; it reads ENQMDLTSSHTVMITKG. The interval 210 to 226 is interaction with BUB1B; the sequence is ANLKLHTEDSRMKKEVN. At T539 the chain carries Phosphothreonine. Residues S578 and S584 each carry the phosphoserine modification. Position 586 is a phosphothreonine (T586). The interval 620 to 646 is disordered; it reads APESTSESHSQSKSSSDECEEITKSRN. Over residues 622 to 633 the composition is skewed to low complexity; sequence ESTSESHSQSKS. S767 carries the post-translational modification Phosphoserine. A 2 X 104 AA approximate repeats region spans residues 855 to 1201; that stretch reads EDESVQKPKF…VTDSHTVFID (347 aa). Copy 1 of the repeat occupies 885–989; that stretch reads DKTIVFSEDD…MTESHTVFID (105 aa). T901 is subject to Phosphothreonine. Phosphoserine is present on residues S956, S1039, S1076, and S1088. Copy 2 of the repeat occupies 1099–1201; that stretch reads DKTIVFSENH…VTDSHTVFID (103 aa). At S1448 the chain carries Phosphoserine. The tract at residues 1639 to 1662 is disordered; sequence SNAKDSRDEENKKSHNGAETTSLP. Residues 1642 to 1651 are compositionally biased toward basic and acidic residues; sequence KDSRDEENKK. Phosphoserine occurs at positions 1675 and 1773. Positions 1789–1803 match the Nuclear localization signal motif; it reads TWVQEEEDIHKEKKI. S1831 carries the phosphoserine modification. Phosphoserine; by TTK is present on residues S1831 and S1834. A phosphoserine mark is found at S1845 and S1860. Residues 1981–2108 form a required for interaction with ZWINT region; the sequence is KMRHCSDKEL…LLELEVQKEQ (128 aa). The stretch at 2024-2133 forms a coiled coil; it reads VQSAQNEREK…EELLDQLSLS (110 aa). An interaction with NSL1, DSN1 and required for assembly into the outer kinetochore region spans residues 2091–2311; the sequence is EEEELQRNLL…GNTSQDDIAT (221 aa).

As to quaternary structure, component of the KNL1 complex composed of KNL1 and ZWINT. Part of the ten-subunit outer kinetochore KMN network that includes the KNL1, MIS12 and NDC80 complexes; a bioriented kinetochore contains approximately 150 copies of the network. Interacts (via C-terminus) with the MIS12 complex subunits NSL1 (via C-terminus), PMF1 and DSN1; the interaction is direct. Interacts (via N-terminal region) with BUB1B (via BUB1 N-terminal domain); the interaction is direct and is required for cell cycle arrest upon activation of the mitotic spindle assembly checkpoint. Interacts (via N-terminal region) with BUB1 (via BUB1 N-terminal domain); the interaction is direct. Interacts with the protein phosphatase PP1 subunit PPP1CA; the interaction is direct and mutually exclusive with binding to microtubules. Interacts with the protein phosphatase PP1 subunit PPP1CC; the interaction is direct and mutually exclusive with binding to microtubules. Post-translationally, phosphorylation by AURKB negatively regulates its interaction with protein phosphatase 1 (PP1) subunit PPP1CA and with microtubules. In terms of tissue distribution, highly expressed in testis, where it is localized in germ cells, in particular in spermatocytes and in the pre-acrosome of round spermatids. Detected in the acrosome of ejaculated spermatozoa. Detected in adult thymus, bone marrow, colon, small intestine, appendix and placenta, and in fetal liver and thymus.

It is found in the nucleus. Its subcellular location is the chromosome. The protein localises to the centromere. The protein resides in the kinetochore. It localises to the cytoplasm. Its function is as follows. Acts as a component of the outer kinetochore KNL1 complex that serves as a docking point for spindle assembly checkpoint components and mediates microtubule-kinetochore interactions. Kinetochores, consisting of a centromere-associated inner segment and a microtubule-contacting outer segment, play a crucial role in chromosome segregation by mediating the physical connection between centromeric DNA and spindle microtubules. The outer kinetochore is made up of the ten-subunit KMN network, comprising the MIS12, NDC80 and KNL1 complexes, and auxiliary microtubule-associated components; together they connect the outer kinetochore with the inner kinetochore, bind microtubules, and mediate interactions with mitotic checkpoint proteins that delay anaphase until chromosomes are bioriented on the spindle. Required for kinetochore binding by a distinct subset of kMAPs (kinetochore-bound microtubule-associated proteins) and motors. Acts in coordination with CENPK to recruit the NDC80 complex to the outer kinetochore. Can bind either to microtubules or to the protein phosphatase 1 (PP1) catalytic subunits PPP1CA and PPP1CC (via overlapping binding sites), it has higher affinity for PP1. Recruits MAD2L1 to the kinetochore and also directly links BUB1 and BUB1B to the kinetochore. In addition to orienting mitotic chromosomes, it is also essential for alignment of homologous chromosomes during meiotic metaphase I. In meiosis I, required to activate the spindle assembly checkpoint at unattached kinetochores to correct erroneous kinetochore-microtubule attachments. This chain is Outer kinetochore KNL1 complex subunit KNL1, found in Homo sapiens (Human).